The sequence spans 185 residues: Potassium-transporting ATPase KdpC subunit (185 aa).

A helical membrane pass occupies residues 14–34 (ALSLLTGVAYPLALTGIAAVI). The segment at 105-128 (AQNGAPAPVDAVTASGSGLDPHVS) is disordered.

Belongs to the KdpC family. In terms of assembly, the system is composed of three essential subunits: KdpA, KdpB and KdpC.

Its subcellular location is the cell inner membrane. Functionally, part of the high-affinity ATP-driven potassium transport (or Kdp) system, which catalyzes the hydrolysis of ATP coupled with the electrogenic transport of potassium into the cytoplasm. This subunit acts as a catalytic chaperone that increases the ATP-binding affinity of the ATP-hydrolyzing subunit KdpB by the formation of a transient KdpB/KdpC/ATP ternary complex. This is Potassium-transporting ATPase KdpC subunit from Cereibacter sphaeroides (strain ATCC 17029 / ATH 2.4.9) (Rhodobacter sphaeroides).